The chain runs to 284 residues: Interferon antagonist OPG040 (284 aa).

6 ANK repeats span residues 29 to 58, 60 to 89, 93 to 122, 127 to 157, 159 to 188, and 193 to 222; these read HGHSALYYAIADNNVRLVCTLLNAGALKNL, ENEFPLHQAATLEDTKIVKILLFSGLDDSQ, KGNTALYYAVDSGNMQTVKLFVKKNWRLMF, GWKTSFYHAVMLNDVSIVSYFLSEIPSTFDL, ILLSCIHITIKNGHVDMMILLLDYMTSTNT, and LFIPDIKLAIDNKDIEMLQALFKYDINIYS.

This sequence belongs to the orthopoxvirus OPG039 family.

Its subcellular location is the host cytoplasm. The protein localises to the host nucleus. In terms of biological role, inhibits antiviral activity induced by type I interferons. Does not block signal transduction of IFN, but is important to counter the host antiviral state induced by a pre-treatment with IFN. Plays a role in the inhibition of host NF-kappa-B activation by preventing the acetylation of the RELA/p65 subunit of NF-kappaB. The chain is Interferon antagonist OPG040 (OPG039) from Bos taurus (Bovine).